Consider the following 310-residue polypeptide: Carbamate kinase 1 (310 aa).

The protein belongs to the carbamate kinase family.

It is found in the cytoplasm. The enzyme catalyses hydrogencarbonate + NH4(+) + ATP = carbamoyl phosphate + ADP + H2O + H(+). It functions in the pathway metabolic intermediate metabolism; carbamoyl phosphate degradation; CO(2) and NH(3) from carbamoyl phosphate: step 1/1. The protein is Carbamate kinase 1 (arcC1) of Staphylococcus aureus (strain COL).